Reading from the N-terminus, the 1150-residue chain is MHPPEATTKMSSVRFMVTPTKIDDIPGLSDTSPDLSSRSSSRVRFSSRESVPETSRSEPMSELSGATTSLATVALDPSSDRTSNPQDVTEDPSQNSITGEHSQLLDDGHKKARNAYLNNSNYEEGDEYFDKNLALFEEEMDTRPKVSSLLNRMANYTNLTQGAKEHEEAENITEGKKKPTKSPQMGTFMGVYLPCLQNIFGVILFLRLTWVVGTAGILQAFAIVLICCCCTMLTAISMSAIATNGVVPAGGSYFMISRALGPEFGGAVGLCFYLGTTFAAAMYILGAIEIFLVYIVPRAAIFRSDDALKESAAMLNNMRVYGTAFLVLMVLVVFIGVRYVNKFASLFLACVIVSILAIYAGAIKSSFAPPHFPVCMLGNRTLSSRHLDICSKTKEVDNMTVPSKLWGFFCNSSQFFNATCDEYFVHNNVISIQGIPGLASGIITENLWSNYLPKGEIIEKPSAKSSDVLGNLNHEYVLADITTSFTLLVGIFFPSVTGIMAGSNRSGDLKDAQKSIPIGTILAILTTSFVYLSNVVLFGACIEGVVLRDKFGDAVKGNLVVGTLSWPSPWVIVIGSFFSTCGAGLQSLTGAPRLLQAIAKDNIIPFLRVFGHSKANGEPTWALLLTAAIAELGILIASLDLVAPILSMFFLMCYLFVNLACALQTLLRTPNWRPRFRYYHWALSFMGMSICLALMFISSWYYAIVAMVIAGMIYKYIEYQGAEKEWGDGIRGLSLSAARFALLRLEEGPPHTKNWRPQLLVLLKLDEDLHVKHPRLLTFASQLKAGKGLTIVGSVIVGNFLENYGDALAAEQTIKHLMEAEKVKGFCQLVVAAKLKEGISHLIQSCGLGGMKHNTVVMGWPNGWRQSEDARAWKTFIGTVRVTTAAHLALLVAKNVSFFPSNVEQFSEGNIDVWWIVHDGGMLMLLPFLLKQHKVWRKCSIRIFTVAQLEDNSIQMKKDLATFLYHLRIEAEVEVVEMHDSDISAYTYERTLMMEQRSQMLRHMRLSKTERDREAQLVKDRNSMLRLTSIGSDEDEETETYQEKVHMTWTKDKYMASRGQKVKSMEGFQDLLNMRPDQSNVRRMHTAVKLNEVIVNKSHEAKLVLLNMPGPPRNPEGDENYMEFLEVLTEGLERVLLVRGGGSEVITIYS.

A disordered region spans residues 1–108 (MHPPEATTKM…GEHSQLLDDG (108 aa)). Topologically, residues 1–135 (MHPPEATTKM…DEYFDKNLAL (135 aa)) are cytoplasmic. Residues 28–45 (LSDTSPDLSSRSSSRVRF) show a composition bias toward low complexity. The residue at position 32 (Ser32) is a Phosphoserine. Over residues 80–101 (DRTSNPQDVTEDPSQNSITGEH) the composition is skewed to polar residues. Ser120 bears the Phosphoserine mark. Residues 136 to 158 (FEEEMDTRPKVSSLLNRMANYTN) form a discontinuously helical membrane-spanning segment. K(+) contacts are provided by Ser147 and Ser148. Ser148 carries the post-translational modification Phosphoserine. Asn151 lines the chloride pocket. At 159–165 (LTQGAKE) the chain is on the extracellular side. A disordered region spans residues 161-181 (QGAKEHEEAENITEGKKKPTK). Over residues 163–177 (AKEHEEAENITEGKK) the composition is skewed to basic and acidic residues. Residues 166–188 (HEEAENITEGKKKPTKSPQMGTF) traverse the membrane as a helical segment. Over 189-211 (MGVYLPCLQNIFGVILFLRLTWV) the chain is Cytoplasmic. A helical membrane pass occupies residues 212-245 (VGTAGILQAFAIVLICCCCTMLTAISMSAIATNG). Residues 246–263 (VVPAGGSYFMISRALGPE) are Extracellular-facing. Transmembrane regions (helical) follow at residues 264 to 287 (FGGAVGLCFYLGTTFAAAMYILGA) and 288 to 316 (IEIFLVYIVPRAAIFRSDDALKESAAMLN). Tyr283 contributes to the K(+) binding site. Residues 317–433 (NMRVYGTAFL…FVHNNVISIQ (117 aa)) lie on the Extracellular side of the membrane. Cysteines 375 and 390 form a disulfide. 4 N-linked (GlcNAc...) asparagine glycosylation sites follow: Asn379, Asn398, Asn411, and Asn417. A disulfide bond links Cys410 and Cys420. Residues 434-454 (GIPGLASGIITENLWSNYLPK) form a helical membrane-spanning segment. Ile443, Thr444, and Asn446 together coordinate K(+). 2 residues coordinate chloride: Ile443 and Thr444. Leu447 and Trp448 together coordinate chloride. Residues 455–464 (GEIIEKPSAK) lie on the Cytoplasmic side of the membrane. Residues 465-487 (SSDVLGNLNHEYVLADITTSFTL) traverse the membrane as a helical segment. At 488-518 (LVGIFFPSVTGIMAGSNRSGDLKDAQKSIPI) the chain is on the extracellular side. Residue Thr497 coordinates K(+). The helical transmembrane segment at 519-545 (GTILAILTTSFVYLSNVVLFGACIEGV) threads the bilayer. Residues 546-568 (VLRDKFGDAVKGNLVVGTLSWPS) lie on the Cytoplasmic side of the membrane. 2 helical membrane passes run 569 to 589 (PWVIVIGSFFSTCGAGLQSLT) and 590 to 612 (GAPRLLQAIAKDNIIPFLRVFGH). Chloride is bound at residue Ile603. Residues 613–629 (SKANGEPTWALLLTAAI) lie on the Cytoplasmic side of the membrane. 2 helical membrane-spanning segments follow: residues 630-649 (AELGILIASLDLVAPILSMF) and 650-665 (FLMCYLFVNLACALQT). Tyr654 is a binding site for chloride. The Cytoplasmic portion of the chain corresponds to 666–1150 (LLRTPNWRPR…GGSEVITIYS (485 aa)). The interval 682–691 (ALSFMGMSIC) is scissor helix. Ser736 is modified (phosphoserine). Thr778 bears the Phosphothreonine mark. A Phosphoserine modification is found at Ser981. Thr991 bears the Phosphothreonine mark. Residues Ser1023, Ser1029, and Ser1032 each carry the phosphoserine modification. At Thr1048 the chain carries Phosphothreonine. Tyr1121 carries the phosphotyrosine modification.

The protein belongs to the SLC12A transporter family. K/Cl co-transporter subfamily. In terms of assembly, homodimer; adopts a domain-swap conformation at the scissor helices connecting the transmembrane domain and C-terminal domain. Heterodimer with K-Cl cotransporter SLC12A5. Interacts (via C-terminus) with CKB; the interaction may be required for potassium-chloride cotransport activity. Post-translationally, phosphorylated, phosphorylation regulates transporter activity. Phosphorylated at Thr-991 and Thr-1048 by OXSR1/OSR1 and STK39/SPAK downstream of WNK kinases (WNK1, WNK2, WNK3 or WNK4), inhibiting the potassium-chloride cotransport activity. N-glycosylated. In terms of tissue distribution, expressed in hippocampus and corpus callosum (at protein level). Highly expressed throughout the brain and detected at lower levels in kidney. Highly expressed in highly myelinated white matter of the brain, but not in gray matter. Detected in the corpus callosum, in packed cell layers of the hippocampus and in Purkinje neurons within the cerebellum. Highly expressed in white matter in the spinal cord, but not in dorsal root ganglia or sciatic nerve. Colocalizes with the oligodendrocyte marker CNP. Expressed in hippocampus in CA1, and to a lesser extent CA3 pyramidal cells. Also expressed in cortex, mostly in large neurons and in the large cerebellar Purkinje cells. Highly expressed in kidney, but not detected in brain.

It is found in the cell membrane. The protein resides in the basolateral cell membrane. It carries out the reaction K(+)(in) + chloride(in) = K(+)(out) + chloride(out). Inhibited following phosphorylation by OXSR1/OSR1 and STK39/SPAK: phosphorylation takes place downstream of WNK kinases (WNK1, WNK2, WNK3 or WNK4) in response to hyperosmotic stress and subsequent cell shrinkage. Mediates electroneutral potassium-chloride cotransport when activated by cell swelling. May contribute to cell volume homeostasis in single cells. In terms of biological role, mediates electroneutral potassium-chloride cotransport when activated by cell swelling. May contribute to cell volume homeostasis in single cells. In Mus musculus (Mouse), this protein is Solute carrier family 12 member 6 (Slc12a6).